The following is a 347-amino-acid chain: Ribosomal RNA large subunit methyltransferase M (347 aa).

Residues Ser184, 217–220, Asp236, Asp256, and Asp272 contribute to the S-adenosyl-L-methionine site; that span reads APGG. The active-site Proton acceptor is the Lys301.

This sequence belongs to the class I-like SAM-binding methyltransferase superfamily. RNA methyltransferase RlmE family. RlmM subfamily. Monomer.

It localises to the cytoplasm. It carries out the reaction cytidine(2498) in 23S rRNA + S-adenosyl-L-methionine = 2'-O-methylcytidine(2498) in 23S rRNA + S-adenosyl-L-homocysteine + H(+). Its function is as follows. Catalyzes the 2'-O-methylation at nucleotide C2498 in 23S rRNA. This is Ribosomal RNA large subunit methyltransferase M from Xanthomonas axonopodis pv. citri (strain 306).